The primary structure comprises 586 residues: Kelch-like protein 7 (586 aa).

The BTB domain maps to 44 to 111; that stretch reads CDVILMVQER…AYTARISVNS (68 aa). Residues 146 to 248 form the BACK domain; sequence CLGISVLAEC…SKNFLSKTVQ (103 aa). Kelch repeat units lie at residues 294–336, 337–382, 383–430, 431–481, 483–528, and 530–575; these read RIAL…FWDN, VVYI…AAEG, KIYT…EANG, LIYV…FVKD, IFAV…AVGS, and VYVL…CVVD.

As to quaternary structure, homodimer. Component of the BCR(KLHL7) E3 ubiquitin ligase complex.

The protein localises to the nucleus. It is found in the cytoplasm. It participates in protein modification; protein ubiquitination. Substrate-specific adapter of a BCR (BTB-CUL3-RBX1) E3 ubiquitin ligase complex. The BCR(KLHL7) complex acts by mediating ubiquitination and subsequent degradation of substrate proteins. Probably mediates 'Lys-48'-linked ubiquitination. This is Kelch-like protein 7 (KLHL7) from Gallus gallus (Chicken).